A 149-amino-acid chain; its full sequence is Large ribosomal subunit protein bL9 (149 aa).

Belongs to the bacterial ribosomal protein bL9 family.

Binds to the 23S rRNA. This Salmonella agona (strain SL483) protein is Large ribosomal subunit protein bL9.